The chain runs to 793 residues: Phosphoribosylformylglycinamidine synthase subunit PurL (793 aa).

His53 is a catalytic residue. ATP-binding residues include Tyr56 and Lys95. A Mg(2+)-binding site is contributed by Glu97. Residues 98 to 101 and Arg120 each bind substrate; that span reads SHNH. The active-site Proton acceptor is the His99. Asp121 is a Mg(2+) binding site. Residue Gln244 coordinates substrate. Asp272 serves as a coordination point for Mg(2+). Residue 316-318 coordinates substrate; that stretch reads ESQ. Positions 523 and 560 each coordinate ATP. Asn561 contacts Mg(2+). Ser563 lines the substrate pocket.

Belongs to the FGAMS family. As to quaternary structure, monomer. Part of the FGAM synthase complex composed of 1 PurL, 1 PurQ and 2 PurS subunits.

Its subcellular location is the cytoplasm. The catalysed reaction is N(2)-formyl-N(1)-(5-phospho-beta-D-ribosyl)glycinamide + L-glutamine + ATP + H2O = 2-formamido-N(1)-(5-O-phospho-beta-D-ribosyl)acetamidine + L-glutamate + ADP + phosphate + H(+). It functions in the pathway purine metabolism; IMP biosynthesis via de novo pathway; 5-amino-1-(5-phospho-D-ribosyl)imidazole from N(2)-formyl-N(1)-(5-phospho-D-ribosyl)glycinamide: step 1/2. Functionally, part of the phosphoribosylformylglycinamidine synthase complex involved in the purines biosynthetic pathway. Catalyzes the ATP-dependent conversion of formylglycinamide ribonucleotide (FGAR) and glutamine to yield formylglycinamidine ribonucleotide (FGAM) and glutamate. The FGAM synthase complex is composed of three subunits. PurQ produces an ammonia molecule by converting glutamine to glutamate. PurL transfers the ammonia molecule to FGAR to form FGAM in an ATP-dependent manner. PurS interacts with PurQ and PurL and is thought to assist in the transfer of the ammonia molecule from PurQ to PurL. The chain is Phosphoribosylformylglycinamidine synthase subunit PurL from Prochlorococcus marinus (strain SARG / CCMP1375 / SS120).